We begin with the raw amino-acid sequence, 354 residues long: MATGGGRAFAWQVFPPMPTCRVYGTVAFQDGHLLVLGGCGRAGLPLDTAETLDMASHTWVALAPLPTARAGAAAVVLGKQVLVVGGVDEGQSPVAAVEAFLADEGRWERRATLPQAAMGVATVERDGMVYALGGMGPDTAPQAQVRVYEPRRDCWLSLPSMPTPCYGASTFLHGNKIYVLGGRQGKLPVTAFEAFDLEARTWTRHPSLPSRRAFAGCAMAEGSVFSLGGLQQPGPHNFYSRPHFVNTVEMFDLEHGSWTKLPRSLRMRDKRADFVVGSLGDHVVAIGGLGNQPCPLGSVEGFGLARRRWEALPAMPTARCSCSSLQAGPRLFAIGGVAQGPSQAVEALCLRDGV.

Kelch repeat units lie at residues 1-31 (MATG…FQDG), 32-79 (HLLV…VLGK), 81-127 (VLVV…ERDG), 128-175 (MVYA…LHGN), 176-222 (KIYV…MAEG), 224-281 (VFSL…SLGD), 282-329 (HVVA…QAGP), and 331-354 (LFAI…RDGV).

Its subcellular location is the cytoplasm. The protein resides in the midbody. Its function is as follows. Involved in pinching off the separated nuclei at the cleavage furrow and in cytokinesis. Required for mitotic integrity and maintenance of chromosomal stability. Protects cells against mitotic errors, centrosomal amplification, micronucleus formation and aneuploidy. Plays a key role of midbody function involving abscission of the daughter cells during cytokinesis and appropriate chromosomal and nuclear segregation into the daughter cells. The sequence is that of Kelch domain-containing protein 8B (KLHDC8B) from Bos taurus (Bovine).